Reading from the N-terminus, the 764-residue chain is 5-methyltetrahydropteroyltriglutamate--homocysteine methyltransferase (764 aa).

Residues 16 to 19 (RELK) and K121 each bind 5-methyltetrahydropteroyltri-L-glutamate. L-homocysteine-binding positions include 440 to 442 (IGS) and E493. Residues 440–442 (IGS) and E493 contribute to the L-methionine site. 5-methyltetrahydropteroyltri-L-glutamate contacts are provided by residues 524–525 (RC) and W570. D608 provides a ligand contact to L-homocysteine. L-methionine is bound at residue D608. E614 contacts 5-methyltetrahydropteroyltri-L-glutamate. Residues H650, C652, and E674 each coordinate Zn(2+). H703 (proton donor) is an active-site residue. Residue C735 participates in Zn(2+) binding.

It belongs to the vitamin-B12 independent methionine synthase family. The cofactor is Zn(2+).

It carries out the reaction 5-methyltetrahydropteroyltri-L-glutamate + L-homocysteine = tetrahydropteroyltri-L-glutamate + L-methionine. It participates in amino-acid biosynthesis; L-methionine biosynthesis via de novo pathway; L-methionine from L-homocysteine (MetE route): step 1/1. Its function is as follows. Catalyzes the transfer of a methyl group from 5-methyltetrahydrofolate to homocysteine resulting in methionine formation. This Burkholderia orbicola (strain MC0-3) protein is 5-methyltetrahydropteroyltriglutamate--homocysteine methyltransferase.